A 507-amino-acid chain; its full sequence is Maturase K (507 aa).

The protein belongs to the intron maturase 2 family. MatK subfamily.

It localises to the plastid. Its subcellular location is the chloroplast. Functionally, usually encoded in the trnK tRNA gene intron. Probably assists in splicing its own and other chloroplast group II introns. The chain is Maturase K from Calocedrus decurrens (California incense-cedar).